The sequence spans 993 residues: Mediator of RNA polymerase II transcription subunit 24 (993 aa).

Ser-827 and Ser-829 each carry phosphoserine.

The protein belongs to the Mediator complex subunit 24 family. In terms of assembly, component of the Mediator complex, which includes at least CDK8, MED4, MED6, MED11, MED14, MED17, MED18, MED20, MED21, MED22, MED27, MED28, MED30 and MED31.

The protein localises to the nucleus. In terms of biological role, component of the Mediator complex, a coactivator involved in the regulated transcription of nearly all RNA polymerase II-dependent genes. Mediator functions as a bridge to convey information from gene-specific regulatory proteins to the basal RNA polymerase II transcription machinery. Mediator is recruited to promoters by direct interactions with regulatory proteins and serves as a scaffold for the assembly of a functional preinitiation complex with RNA polymerase II and the general transcription factors. Required for activated transcription of the MtnA, MtnB and MtnD genes. The sequence is that of Mediator of RNA polymerase II transcription subunit 24 (MED24) from Drosophila melanogaster (Fruit fly).